The primary structure comprises 1687 residues: A-kinase anchor protein SPHKAP (1687 aa).

A compositionally biased stretch (polar residues) spans 1–14 (MDVNSRLSVQSNVE). 2 disordered regions span residues 1 to 25 (MDVNSRLSVQSNVESPLMHEGPEPQ) and 272 to 293 (RKHRTPSTKTEGSKENTEENTS). The segment at 914-931 (FAEELAETVVSMATEIAA) is PKA-RII subunit binding domain. Residues 964–989 (LKRKKENSSAGSTVRKHKPPRLSEIK) are disordered. Phosphoserine occurs at positions 1010, 1070, 1092, 1105, 1106, 1109, 1244, and 1273. Disordered stretches follow at residues 1363–1406 (VTEG…SPRR) and 1421–1520 (DQKE…PDDT). Polar residues predominate over residues 1366 to 1375 (GNHSPVSSPG). Residues 1382 to 1393 (KPSDFDPRRETS) are compositionally biased toward basic and acidic residues. A compositionally biased stretch (polar residues) spans 1461-1470 (TAPSTCQSSR). Positions 1482 to 1494 (EVLKEDIPRDESR) are enriched in basic and acidic residues. Positions 1495-1508 (NPPSSSEESTGSWS) are enriched in low complexity.

The protein belongs to the AKAP110 family. As to quaternary structure, interacts (via the PKA-RII subunit binding domain) with the RI subunit of PKA. Interacts with SPHK1; the interaction greatly reduces SPHK1 activity.

The protein resides in the cytoplasm. Functionally, anchoring protein that binds preferentially to the type I regulatory subunit of c-AMP-dependent protein kinase (PKA type I) and targets it to distinct subcellular compartments. May act as a converging factor linking cAMP and sphingosine signaling pathways. Plays a regulatory role in the modulation of SPHK1. This is A-kinase anchor protein SPHKAP (Sphkap) from Mus musculus (Mouse).